A 201-amino-acid polypeptide reads, in one-letter code: ATP-dependent Clp protease proteolytic subunit (201 aa).

Catalysis depends on S98, which acts as the Nucleophile. H123 is an active-site residue.

Belongs to the peptidase S14 family. Fourteen ClpP subunits assemble into 2 heptameric rings which stack back to back to give a disk-like structure with a central cavity, resembling the structure of eukaryotic proteasomes.

The protein resides in the cytoplasm. The enzyme catalyses Hydrolysis of proteins to small peptides in the presence of ATP and magnesium. alpha-casein is the usual test substrate. In the absence of ATP, only oligopeptides shorter than five residues are hydrolyzed (such as succinyl-Leu-Tyr-|-NHMec, and Leu-Tyr-Leu-|-Tyr-Trp, in which cleavage of the -Tyr-|-Leu- and -Tyr-|-Trp bonds also occurs).. In terms of biological role, cleaves peptides in various proteins in a process that requires ATP hydrolysis. Has a chymotrypsin-like activity. Plays a major role in the degradation of misfolded proteins. In Rickettsia akari (strain Hartford), this protein is ATP-dependent Clp protease proteolytic subunit.